The primary structure comprises 482 residues: Major cardiolipin synthase ClsA (482 aa).

The next 2 helical transmembrane spans lie at 3–23 (ISSI…IIVI) and 34–54 (WAWL…YLLF). PLD phosphodiesterase domains follow at residues 217–244 (LNYR…GDEY) and 395–422 (DNGF…DVRS). Residues histidine 222, lysine 224, aspartate 229, histidine 400, lysine 402, and aspartate 407 contribute to the active site.

This sequence belongs to the phospholipase D family. Cardiolipin synthase subfamily.

The protein localises to the cell membrane. It catalyses the reaction 2 a 1,2-diacyl-sn-glycero-3-phospho-(1'-sn-glycerol) = a cardiolipin + glycerol. Its function is as follows. Catalyzes the reversible phosphatidyl group transfer from one phosphatidylglycerol molecule to another to form cardiolipin (CL) (diphosphatidylglycerol) and glycerol. The sequence is that of Major cardiolipin synthase ClsA (clsA) from Bacillus subtilis (strain 168).